We begin with the raw amino-acid sequence, 987 residues long: SNF2 domain-containing protein ENL1 (987 aa).

Disordered stretches follow at residues 1–172 (MASP…AYGG) and 224–245 (FGDY…ENHA). Composition is skewed to pro residues over residues 18–27 (TPPAPTPLAA) and 51–71 (NPNP…PQEP). The span at 99–110 (DSIRDILDDLTT) shows a compositional bias: basic and acidic residues. The span at 141-156 (PSQSQLNDGTKPSSSF) shows a compositional bias: polar residues. The span at 226–237 (DYDDEDDIDQDA) shows a compositional bias: acidic residues. Residues 292–466 (WVLHCRGTGG…WALFYFCCPE (175 aa)) form the Helicase ATP-binding domain. Residue 305-312 (DDMGLGKT) participates in ATP binding. The DEAH box signature appears at 417–420 (DEGH). The region spanning 645-801 (SLLQNLVSEG…TRYFSKRDIQ (157 aa)) is the Helicase C-terminal domain.

The protein belongs to the SNF2/RAD54 helicase family. As to expression, expressed in ovaries, roots, shoots and leaves.

The protein resides in the cytoplasm. It localises to the chromosome. Its function is as follows. DNA helicase that acts as an essential component of the spindle assembly checkpoint. Plays an indispensable role in the development of seed endosperm. Is required to secure sister chromosome separation during endosperm syncytial mitosis, which involves extremely rapid free nuclear cycles. This is SNF2 domain-containing protein ENL1 from Oryza sativa subsp. japonica (Rice).